The primary structure comprises 318 residues: Pantothenate kinase (318 aa).

G96–S103 is an ATP binding site.

This sequence belongs to the prokaryotic pantothenate kinase family.

It is found in the cytoplasm. It catalyses the reaction (R)-pantothenate + ATP = (R)-4'-phosphopantothenate + ADP + H(+). It participates in cofactor biosynthesis; coenzyme A biosynthesis; CoA from (R)-pantothenate: step 1/5. The chain is Pantothenate kinase from Bradyrhizobium sp. (strain ORS 278).